The primary structure comprises 973 residues: ATP-dependent DNA helicase Q5 (973 aa).

Positions 39–213 constitute a Helicase ATP-binding domain; sequence MAVVKGDKDV…FAALHLKQPV (175 aa). 52–59 serves as a coordination point for ATP; it reads MPTGAGKS. The short motif at 157-160 is the DEAH box element; it reads DEAH. Positions 241–398 constitute a Helicase C-terminal domain; that stretch reads NLRDFCLKAL…NKPSDKATLL (158 aa). 4 residues coordinate Zn(2+): cysteine 412, cysteine 428, cysteine 432, and cysteine 435. Phosphoserine occurs at positions 489 and 492. An interaction with POLR2A region spans residues 491–621; the sequence is GSGDEGRDEA…ASKDGQLYDM (131 aa). Disordered regions lie at residues 518–538, 679–795, and 822–884; these read GKEA…LRDA, TEKL…VPGK, and CSLE…AREP. Threonine 527 carries the post-translational modification Phosphothreonine. Positions 653–726 are interaction with RAD51; that stretch reads PKRVGAGFSK…APGSRTNCGD (74 aa). At serine 728 the chain carries Phosphoserine; by CDK1. Positions 840-856 are enriched in basic and acidic residues; that stretch reads TQAEKRPRPQQESQEKR. Over residues 863-878 the composition is skewed to polar residues; the sequence is PSTNSSALASDPSTEN.

Belongs to the helicase family. RecQ subfamily. As to quaternary structure, monomer. Interacts with TOP2A, TOP3A and TOP3B. Interacts with RNA polymerase II subunit POLR2A. Identified in a complex with the RNA polymerase II core bound to DNA. Interacts with RAD51. Interacts with WRN; this interaction stimulates WRN helicase activity on DNA fork duplexes. Interacts with MUS1; this interaction promotes MUS81-dependent mitotic DNA synthesis. Requires Zn(2+) as cofactor. In terms of processing, phosphorylated by CDK1 at Ser-728; this phosphorylation is required for RECQL5-mediated disruption of RAD51 filaments on stalled replication forks.

The protein localises to the nucleus. It localises to the nucleoplasm. The enzyme catalyses Couples ATP hydrolysis with the unwinding of duplex DNA by translocating in the 3'-5' direction.. It catalyses the reaction ATP + H2O = ADP + phosphate + H(+). In terms of biological role, DNA helicase that plays an important role in DNA replication, transcription and repair. Binds to the RNA polymerase II subunit POLR2A during transcription elongation and suppresses transcription-associated genomic instability. Also associates with POLR1A and enforces the stability of ribosomal DNA arrays. Plays an important role in mitotic chromosome separation after cross-over events and cell cycle progress. Mechanistically, removes RAD51 filaments protecting stalled replication forks at common fragile sites and stimulates MUS81-EME1 endonuclease leading to mitotic DNA synthesis. Required for efficient DNA repair, including repair of inter-strand cross-links. Stimulates DNA decatenation mediated by TOP2A. Prevents sister chromatid exchange and homologous recombination. The sequence is that of ATP-dependent DNA helicase Q5 (Recql5) from Rattus norvegicus (Rat).